A 369-amino-acid chain; its full sequence is DNA replication and repair protein RecF (369 aa).

30–37 is a binding site for ATP; the sequence is GDNGSGKT.

Belongs to the RecF family.

Its subcellular location is the cytoplasm. Functionally, the RecF protein is involved in DNA metabolism; it is required for DNA replication and normal SOS inducibility. RecF binds preferentially to single-stranded, linear DNA. It also seems to bind ATP. The protein is DNA replication and repair protein RecF of Pseudomonas aeruginosa (strain LESB58).